A 590-amino-acid polypeptide reads, in one-letter code: Probable lysine-specific demethylase 4B (590 aa).

Residues 9–51 (IKVFRPTWEEFKDFPKYVAYMESQGAHKAGLAKVVPPPEWVPR) form the JmjN domain. Residue tyrosine 130 participates in 2-oxoglutarate binding. The JmjC domain occupies 140 to 306 (DTDQDSWNIN…YGKRAVQCTC (167 aa)). Fe cation is bound by residues histidine 186 and glutamate 188. Asparagine 196 and lysine 204 together coordinate 2-oxoglutarate. Zn(2+)-binding residues include cysteine 232 and histidine 238. Residue lysine 239 coordinates 2-oxoglutarate. Histidine 274 lines the Fe cation pocket. Cysteine 304 and cysteine 306 together coordinate Zn(2+). Disordered regions lie at residues 372-395 (PTKA…QNPN) and 417-590 (ATDE…TASP). Acidic residues predominate over residues 445–458 (EYIDDGTEDDDEEE). Residues 480–494 (SKRKTNSRNNRGRSP) show a composition bias toward basic residues. 2 stretches are compositionally biased toward low complexity: residues 502–513 (ISPASSTSSTSR) and 537–571 (TTSP…TPPA).

Belongs to the JHDM3 histone demethylase family. Fe(2+) is required as a cofactor.

It is found in the nucleus. It catalyses the reaction N(6),N(6),N(6)-trimethyl-L-lysyl(9)-[histone H3] + 2 2-oxoglutarate + 2 O2 = N(6)-methyl-L-lysyl(9)-[histone H3] + 2 formaldehyde + 2 succinate + 2 CO2. Its function is as follows. Probable histone demethylase that specifically demethylates 'Lys-9' and 'Lys-36' residues of histone H3, thereby playing a central role in histone code. Demethylation of Lys residue generates formaldehyde and succinate. The sequence is that of Probable lysine-specific demethylase 4B (Kdm4B) from Drosophila melanogaster (Fruit fly).